Reading from the N-terminus, the 234-residue chain is Glucosamine-6-phosphate deaminase (234 aa).

The active-site Proton acceptor; for enolization step is aspartate 63. The active-site For ring-opening step is the asparagine 129. Histidine 131 (proton acceptor; for ring-opening step) is an active-site residue. The active-site For ring-opening step is the glutamate 136.

Belongs to the glucosamine/galactosamine-6-phosphate isomerase family. NagB subfamily.

It catalyses the reaction alpha-D-glucosamine 6-phosphate + H2O = beta-D-fructose 6-phosphate + NH4(+). It participates in amino-sugar metabolism; N-acetylneuraminate degradation; D-fructose 6-phosphate from N-acetylneuraminate: step 5/5. Functionally, catalyzes the reversible isomerization-deamination of glucosamine 6-phosphate (GlcN6P) to form fructose 6-phosphate (Fru6P) and ammonium ion. This Listeria welshimeri serovar 6b (strain ATCC 35897 / DSM 20650 / CCUG 15529 / CIP 8149 / NCTC 11857 / SLCC 5334 / V8) protein is Glucosamine-6-phosphate deaminase.